A 605-amino-acid polypeptide reads, in one-letter code: Elongation factor 4 (605 aa).

The region spanning 9–191 (DTIRNFCIIA…AIIKRVPAPV (183 aa)) is the tr-type G domain. GTP is bound by residues 21–26 (DHGKST) and 138–141 (NKID).

This sequence belongs to the TRAFAC class translation factor GTPase superfamily. Classic translation factor GTPase family. LepA subfamily.

The protein localises to the cell inner membrane. It catalyses the reaction GTP + H2O = GDP + phosphate + H(+). Required for accurate and efficient protein synthesis under certain stress conditions. May act as a fidelity factor of the translation reaction, by catalyzing a one-codon backward translocation of tRNAs on improperly translocated ribosomes. Back-translocation proceeds from a post-translocation (POST) complex to a pre-translocation (PRE) complex, thus giving elongation factor G a second chance to translocate the tRNAs correctly. Binds to ribosomes in a GTP-dependent manner. The protein is Elongation factor 4 of Chlorobium phaeobacteroides (strain BS1).